A 391-amino-acid polypeptide reads, in one-letter code: Steroid side-chain-cleaving aldolase (391 aa).

Tyr-294 (proton acceptor) is an active-site residue. Tyr-344 functions as the Proton donor in the catalytic mechanism.

Belongs to the thiolase-like superfamily. Homodimer. Interacts with the ChsH1/ChsH2 hydratase via the DUF35 C-terminal region of ChsH2 (ChsH2-DUF35).

The catalysed reaction is 17-hydroxy-3-oxochol-4-en-22-oyl-CoA = androst-4-ene-3,17-dione + propanoyl-CoA. Its function is as follows. Probably involved in bile acid degradation. In vitro, when associated with the ChsH1/ChsH2 hydratase, catalyzes the retroaldol cleavage of 17-hydroxy-3-oxo-4-pregnene-20-carboxyl-CoA (17-HOPC-CoA), forming androst-4-ene-3,17-dione and propionyl-CoA. The in vivo substrate is probably a closely analogous bile acid degradation metabolite. The protein is Steroid side-chain-cleaving aldolase of Thermomonospora curvata (strain ATCC 19995 / DSM 43183 / JCM 3096 / KCTC 9072 / NBRC 15933 / NCIMB 10081 / Henssen B9).